A 552-amino-acid polypeptide reads, in one-letter code: WAP, Kazal, immunoglobulin, Kunitz and NTR domain-containing protein 1 (552 aa).

Residues 1–25 (MPAPQPLLPLLFAFVLIHLTSETNL) form the signal peptide. Positions 29–82 (PGSHPGMCPNQLSPHLWVDAQSTCERECTRDQDCAASEKCCTNVCGLQSCVAAR) constitute a WAP domain. Cystine bridges form between Cys36-Cys69, Cys52-Cys73, Cys56-Cys68, Cys62-Cys78, Cys120-Cys150, Cys124-Cys143, Cys132-Cys161, Cys211-Cys267, Cys303-Cys355, Cys310-Cys338, Cys330-Cys351, Cys363-Cys413, Cys372-Cys396, Cys388-Cys409, Cys421-Cys493, Cys424-Cys495, and Cys435-Cys544. Residues 112-163 (WDGQPVCRCRDRCEKEPSFTCASDGLTYYNRCYMDAEACLRGLHLHVVPCKH) enclose the Kazal-like domain. Residues 190-283 (PALYNSPSPQ…GLLRADFPLS (94 aa)) enclose the Ig-like C2-type domain. BPTI/Kunitz inhibitor domains lie at 289–355 (TTQD…QQAC) and 363–413 (CALP…EDAC). The NTR domain occupies 413–544 (CPVPRTPPCR…IVELLEKKAC (132 aa)). The N-linked (GlcNAc...) asparagine glycan is linked to Asn497.

The protein belongs to the WFIKKN family. As to expression, preferentially expressed in the developing inner ear and the dorsal neural tube.

The protein resides in the secreted. Functionally, protease-inhibitor that contains multiple distinct protease inhibitor domains. Probably has serine protease- and metalloprotease-inhibitor activity. The protein is WAP, Kazal, immunoglobulin, Kunitz and NTR domain-containing protein 1 (Wfikkn1) of Rattus norvegicus (Rat).